Here is a 1449-residue protein sequence, read N- to C-terminus: MGARASVLTGGKLDQWESIYLRPGGKKKYRMKHLVWASRELERFACNPGLMDTADGCAKLLNQLEPALKTGSEELRSLYNALAVLYCVHSRIQIHNTQEALDKIKEKQEQHKPEPKNPEAGAAAATDSNISRNYPLVQTAQGQMVHQPLTPRTLNAWVKVIEEKAFSPEVIPMFMALSEGATPSDLNTMLNTVGGHQAAMQMLKEVINEEAADWDRTHPVPVGPLPPGQLRDPRGSDIAGTTSTLAEQVAWMTANPPVPVGDIYRRWIVLGLNRIVRMYSPVSILEIKQGPKEPFRDYVDRFYKTLRAEQATQEVKNWMTETLLVQNANPDCKQLLKALGPGATLEEMMTACQGVGGPAHKARVLAEAMSQVQQPTTSVFAQRGNFKGIRKPIKCFNCGKEGHLARNCKAPRRGGCWKCGQEGHQMKDCKNEGRQFFREELVSLQRETRKLPPDNNKERAHSPATRELWVSGGEEHTGEGDAGEPGEDRELSVPTFNFPQITLWQRPVITVKIGKEVREALLDTGADDTVIEELQLEGKWKPKMIGGIGGFIKVRQYDNITVDIQGRKAVGTVLVGPTPVNIIGRNLLTQIGCTLNFPISPIETVPVKLKPGMDGPKVKQWPLTTEKIEALREICTEMEKEGKISRIGPENPYNTPIFAIKKKDSTKWRKLVDFRELNKRTQDFWEVQLGIPHPAGLKQKKSVTVLDVGDAYFSCPLDKDFRKYTAFTIPSINNETPGIRYQYNVLPQGWKGSPAIFQSTMTKILEPFREKHPEIIIYQYMDDLYVGSDLELAQHREAVEDLRDHLLKWGFTTPDKKHQKEPPFLWMGYELHPDKWTVQPIKLPEKDVWTVNDIQKLVGKLNWASQIYPGIRVKQLCKLIRGTKALTEVVNFTEEAELELAENREILKEPLHGVYYDPGKELVAEIQKQGQGQWTYQIYQELHKNLKTGKYAKMRSAHTNDIKQLVEVVRKVATESIVIWGKTPKFRLPVQKEVWEAWWTDHWQATWIPEWEFVNTPPLVKLWYQLETEPISGAETFYVDGAANRETKLGKAGFVTDRGRQKVVSIADTTNQKAELQAILMALQESGRDVNIVTDSQYAMGIIHSQPDKSESELVSQIIEELIKKERVYLSWVPAHKGIGGNEQVDKLVSSGIRKILFLDGIEKAQEDHDRYHSNWKAMASDFNLPPIVAKEIVASCDKCQLKGEAMHGQVNCSPGVWQLDCTHLEGKIILVAVHVASGYLEAEVIPAETGQETAYFILKLAGRWPVKVIHTDNGSNFTSATVKAACWWANIKQEFGIPYNPQSQGAVESMNKELKKIIGQIRDQAEHLKTAVQMAVFIHNFKRKGGIGGYTAGERIIDIIATDIQTTNLQTQILKVQNFRVYYRDSRDPIWKGPAKLLWKGEGAVVIQDNGDIKVVPRRKAKIIRDYGKQMAGDGCVASGQDENQEME.

Residue Gly-2 is the site of N-myristoyl glycine; by host attachment. The interval 7–31 (VLTGGKLDQWESIYLRPGGKKKYRM) is interaction with Gp41. Residues 8–43 (LTGGKLDQWESIYLRPGGKKKYRMKHLVWASRELER) are interaction with host CALM1. Residues 12–19 (KLDQWESI) are interaction with host AP3D1. Positions 14–33 (DQWESIYLRPGGKKKYRMKH) are interaction with membrane phosphatidylinositol 4,5-bisphosphate and RNA. Positions 16–22 (WESIYLR) match the Nuclear export signal motif. The short motif at 26 to 32 (KKKYRMK) is the Nuclear localization signal element. Residues 73–77 (EELRS) form an interaction with membrane phosphatidylinositol 4,5-bisphosphate region. Tyr-134 carries the post-translational modification Phosphotyrosine; by host. The interval 191–229 (NTVGGHQAAMQMLKEVINEEAADWDRTHPVPVGPLPPGQ) is interaction with human PPIA/CYPA and NUP153. Positions 279–365 (YSPVSILEIK…GGPAHKARVL (87 aa)) are dimerization/Multimerization of capsid protein p24. 2 CCHC-type zinc fingers span residues 393-410 (IKCF…NCKA) and 414-431 (GGCW…DCKN). The segment covering 447–461 (ETRKLPPDNNKERAH) has biased composition (basic and acidic residues). Residues 447 to 489 (ETRKLPPDNNKERAHSPATRELWVSGGEEHTGEGDAGEPGEDR) form a disordered region. Residues 499 to 503 (PQITL) are dimerization of protease. Residues 518–587 (REALLDTGAD…TPVNIIGRNL (70 aa)) form the Peptidase A2 domain. Asp-523 functions as the For protease activity; shared with dimeric partner in the catalytic mechanism. 2 dimerization of protease regions span residues 547-553 (GIGGFIK) and 586-598 (NLLT…LNFP). The Reverse transcriptase domain maps to 641 to 831 (EGKISRIGPE…PPFLWMGYEL (191 aa)). Residues Asp-707, Asp-782, and Asp-783 each contribute to the Mg(2+) site. The interval 824–832 (FLWMGYELH) is RT 'primer grip'. The Tryptophan repeat motif motif lies at 995–1011 (WEAWWTDHWQATWIPEW). The RNase H type-1 domain occupies 1031 to 1154 (ISGAETFYVD…VDKLVSSGIR (124 aa)). Mg(2+) is bound by residues Asp-1040, Glu-1075, Asp-1095, and Asp-1146. Residues 1160–1201 (DGIEKAQEDHDRYHSNWKAMASDFNLPPIVAKEIVASCDKCQ) form an Integrase-type zinc finger. Positions 1169, 1173, 1197, and 1200 each coordinate Zn(2+). Positions 1211-1361 (VNCSPGVWQL…TAGERIIDII (151 aa)) constitute an Integrase catalytic domain. 3 residues coordinate Mg(2+): Asp-1221, Asp-1273, and Glu-1309. The segment at residues 1380-1427 (FRVYYRDSRDPIWKGPAKLLWKGEGAVVIQDNGDIKVVPRRKAKIIRD) is a DNA-binding region (integrase-type).

In terms of assembly, homotrimer; further assembles as hexamers of trimers. Interacts with gp41 (via C-terminus). Interacts with host CALM1; this interaction induces a conformational change in the Matrix protein, triggering exposure of the myristate group. Interacts with host AP3D1; this interaction allows the polyprotein trafficking to multivesicular bodies during virus assembly. Part of the pre-integration complex (PIC) which is composed of viral genome, matrix protein, Vpr and integrase. As to quaternary structure, homodimer; the homodimer further multimerizes as homohexamers or homopentamers. Interacts with human PPIA/CYPA; This interaction stabilizes the capsid. Interacts with human NUP153. Interacts with host PDZD8; this interaction stabilizes the capsid. Interacts with monkey TRIM5; this interaction destabilizes the capsid. Homodimer, whose active site consists of two apposed aspartic acid residues. In terms of assembly, heterodimer of p66 RT and p51 RT (RT p66/p51). Heterodimerization of RT is essential for DNA polymerase activity. The overall folding of the subdomains is similar in p66 RT and p51 RT but the spatial arrangements of the subdomains are dramatically different. As to quaternary structure, homotetramer; may further associate as a homohexadecamer. Part of the pre-integration complex (PIC) which is composed of viral genome, matrix protein, Vpr and integrase. Interacts with human SMARCB1/INI1 and human PSIP1/LEDGF isoform 1. Interacts with human KPNA3; this interaction might play a role in nuclear import of the pre-integration complex. Interacts with human NUP153; this interaction might play a role in nuclear import of the pre-integration complex. Requires Mg(2+) as cofactor. In terms of processing, specific enzymatic cleavages by the viral protease yield mature proteins. The protease is released by autocatalytic cleavage. The polyprotein is cleaved during and after budding, this process is termed maturation. Proteolytic cleavage of p66 RT removes the RNase H domain to yield the p51 RT subunit. Nucleocapsid protein p7 might be further cleaved after virus entry. Tyrosine phosphorylated presumably in the virion by a host kinase. Phosphorylation is apparently not a major regulator of membrane association. Post-translationally, phosphorylated possibly by host MAPK1; this phosphorylation is necessary for Pin1-mediated virion uncoating. In terms of processing, methylated by host PRMT6, impairing its function by reducing RNA annealing and the initiation of reverse transcription.

The protein resides in the host cell membrane. Its subcellular location is the host endosome. The protein localises to the host multivesicular body. It localises to the virion membrane. It is found in the host nucleus. The protein resides in the host cytoplasm. Its subcellular location is the virion. The enzyme catalyses Specific for a P1 residue that is hydrophobic, and P1' variable, but often Pro.. It carries out the reaction Endohydrolysis of RNA in RNA/DNA hybrids. Three different cleavage modes: 1. sequence-specific internal cleavage of RNA. Human immunodeficiency virus type 1 and Moloney murine leukemia virus enzymes prefer to cleave the RNA strand one nucleotide away from the RNA-DNA junction. 2. RNA 5'-end directed cleavage 13-19 nucleotides from the RNA end. 3. DNA 3'-end directed cleavage 15-20 nucleotides away from the primer terminus.. It catalyses the reaction 3'-end directed exonucleolytic cleavage of viral RNA-DNA hybrid.. The catalysed reaction is DNA(n) + a 2'-deoxyribonucleoside 5'-triphosphate = DNA(n+1) + diphosphate. Protease: The viral protease is inhibited by many synthetic protease inhibitors (PIs), such as amprenavir, atazanavir, indinavir, loprinavir, nelfinavir, ritonavir and saquinavir. Use of protease inhibitors in tritherapy regimens permit more ambitious therapeutic strategies. Reverse transcriptase/ribonuclease H: RT can be inhibited either by nucleoside RT inhibitors (NRTIs) or by non nucleoside RT inhibitors (NNRTIs). NRTIs act as chain terminators, whereas NNRTIs inhibit DNA polymerization by binding a small hydrophobic pocket near the RT active site and inducing an allosteric change in this region. Classical NRTIs are abacavir, adefovir (PMEA), didanosine (ddI), lamivudine (3TC), stavudine (d4T), tenofovir (PMPA), zalcitabine (ddC), and zidovudine (AZT). Classical NNRTIs are atevirdine (BHAP U-87201E), delavirdine, efavirenz (DMP-266), emivirine (I-EBU), and nevirapine (BI-RG-587). The tritherapies used as a basic effective treatment of AIDS associate two NRTIs and one NNRTI. Its function is as follows. Mediates, with Gag polyprotein, the essential events in virion assembly, including binding the plasma membrane, making the protein-protein interactions necessary to create spherical particles, recruiting the viral Env proteins, and packaging the genomic RNA via direct interactions with the RNA packaging sequence (Psi). Gag-Pol polyprotein may regulate its own translation, by the binding genomic RNA in the 5'-UTR. At low concentration, the polyprotein would promote translation, whereas at high concentration, the polyprotein would encapsidate genomic RNA and then shut off translation. Targets the polyprotein to the plasma membrane via a multipartite membrane-binding signal, that includes its myristoylated N-terminus. Matrix protein is part of the pre-integration complex. Implicated in the release from host cell mediated by Vpu. Binds to RNA. In terms of biological role, forms the conical core that encapsulates the genomic RNA-nucleocapsid complex in the virion. Most core are conical, with only 7% tubular. The core is constituted by capsid protein hexamer subunits. The core is disassembled soon after virion entry. Host restriction factors such as TRIM5-alpha or TRIMCyp bind retroviral capsids and cause premature capsid disassembly, leading to blocks in reverse transcription. Capsid restriction by TRIM5 is one of the factors which restricts HIV-1 to the human species. Host PIN1 apparently facilitates the virion uncoating. On the other hand, interactions with PDZD8 or CYPA stabilize the capsid. Functionally, encapsulates and protects viral dimeric unspliced genomic RNA (gRNA). Binds these RNAs through its zinc fingers. Acts as a nucleic acid chaperone which is involved in rearangement of nucleic acid secondary structure during gRNA retrotranscription. Also facilitates template switch leading to recombination. As part of the polyprotein, participates in gRNA dimerization, packaging, tRNA incorporation and virion assembly. Its function is as follows. Aspartyl protease that mediates proteolytic cleavages of Gag and Gag-Pol polyproteins during or shortly after the release of the virion from the plasma membrane. Cleavages take place as an ordered, step-wise cascade to yield mature proteins. This process is called maturation. Displays maximal activity during the budding process just prior to particle release from the cell. Also cleaves Nef and Vif, probably concomitantly with viral structural proteins on maturation of virus particles. Hydrolyzes host EIF4GI and PABP1 in order to shut off the capped cellular mRNA translation. The resulting inhibition of cellular protein synthesis serves to ensure maximal viral gene expression and to evade host immune response. Also mediates cleavage of host YTHDF3. Mediates cleavage of host CARD8, thereby activating the CARD8 inflammasome, leading to the clearance of latent HIV-1 in patient CD4(+) T-cells after viral reactivation; in contrast, HIV-1 can evade CARD8-sensing when its protease remains inactive in infected cells prior to viral budding. Multifunctional enzyme that converts the viral RNA genome into dsDNA in the cytoplasm, shortly after virus entry into the cell. This enzyme displays a DNA polymerase activity that can copy either DNA or RNA templates, and a ribonuclease H (RNase H) activity that cleaves the RNA strand of RNA-DNA heteroduplexes in a partially processive 3' to 5' endonucleasic mode. Conversion of viral genomic RNA into dsDNA requires many steps. A tRNA(3)-Lys binds to the primer-binding site (PBS) situated at the 5'-end of the viral RNA. RT uses the 3' end of the tRNA primer to perform a short round of RNA-dependent minus-strand DNA synthesis. The reading proceeds through the U5 region and ends after the repeated (R) region which is present at both ends of viral RNA. The portion of the RNA-DNA heteroduplex is digested by the RNase H, resulting in a ssDNA product attached to the tRNA primer. This ssDNA/tRNA hybridizes with the identical R region situated at the 3' end of viral RNA. This template exchange, known as minus-strand DNA strong stop transfer, can be either intra- or intermolecular. RT uses the 3' end of this newly synthesized short ssDNA to perform the RNA-dependent minus-strand DNA synthesis of the whole template. RNase H digests the RNA template except for two polypurine tracts (PPTs) situated at the 5'-end and near the center of the genome. It is not clear if both polymerase and RNase H activities are simultaneous. RNase H probably can proceed both in a polymerase-dependent (RNA cut into small fragments by the same RT performing DNA synthesis) and a polymerase-independent mode (cleavage of remaining RNA fragments by free RTs). Secondly, RT performs DNA-directed plus-strand DNA synthesis using the PPTs that have not been removed by RNase H as primers. PPTs and tRNA primers are then removed by RNase H. The 3' and 5' ssDNA PBS regions hybridize to form a circular dsDNA intermediate. Strand displacement synthesis by RT to the PBS and PPT ends produces a blunt ended, linear dsDNA copy of the viral genome that includes long terminal repeats (LTRs) at both ends. In terms of biological role, catalyzes viral DNA integration into the host chromosome, by performing a series of DNA cutting and joining reactions. This enzyme activity takes place after virion entry into a cell and reverse transcription of the RNA genome in dsDNA. The first step in the integration process is 3' processing. This step requires a complex comprising the viral genome, matrix protein, Vpr and integrase. This complex is called the pre-integration complex (PIC). The integrase protein removes 2 nucleotides from each 3' end of the viral DNA, leaving recessed CA OH's at the 3' ends. In the second step, the PIC enters cell nucleus. This process is mediated through integrase and Vpr proteins, and allows the virus to infect a non dividing cell. This ability to enter the nucleus is specific of lentiviruses, other retroviruses cannot and rely on cell division to access cell chromosomes. In the third step, termed strand transfer, the integrase protein joins the previously processed 3' ends to the 5' ends of strands of target cellular DNA at the site of integration. The 5'-ends are produced by integrase-catalyzed staggered cuts, 5 bp apart. A Y-shaped, gapped, recombination intermediate results, with the 5'-ends of the viral DNA strands and the 3' ends of target DNA strands remaining unjoined, flanking a gap of 5 bp. The last step is viral DNA integration into host chromosome. This involves host DNA repair synthesis in which the 5 bp gaps between the unjoined strands are filled in and then ligated. Since this process occurs at both cuts flanking the HIV genome, a 5 bp duplication of host DNA is produced at the ends of HIV-1 integration. Alternatively, Integrase may catalyze the excision of viral DNA just after strand transfer, this is termed disintegration. The sequence is that of Gag-Pol polyprotein (gag-pol) from Human immunodeficiency virus type 1 group N (isolate YBF30) (HIV-1).